The primary structure comprises 348 residues: GPALPP motifs-containing protein 1 (348 aa).

2 disordered regions span residues 1 to 163 (MARD…AKGP) and 177 to 317 (QRMK…DLKV). The residue at position 2 (A2) is an N-acetylalanine. Residues 7–12 (GPALPP) carry the GPALPP motif 1 motif. Over residues 14-27 (FKERATVEDQERDP) the composition is skewed to basic and acidic residues. The residue at position 28 (S28) is a Phosphoserine. Residues 32 to 37 (GPALPP) carry the GPALPP motif 2 motif. Positions 41–59 (SSSSDSSDSNEDSSSLSEE) are enriched in low complexity. Over residues 60–69 (GNQESEEDDA) the composition is skewed to acidic residues. The GPALPP motif 3 motif lies at 93–98 (GPALPP). S106 bears the Phosphoserine mark. Positions 108–117 (PRPIIGPALP) are enriched in pro residues. A GPALPP motif 4 motif is present at residues 113 to 118 (GPALPP). S138, S143, and S148 each carry phosphoserine. Acidic residues predominate over residues 144–154 (EEAESGEDEDI). 4 stretches are compositionally biased toward basic and acidic residues: residues 177-195 (QRMKEKLTKGDDDSPKPVT), 235-269 (PADRERKAKEIQEARKSLSKKDEENMLSGRDKRLA), 277-287 (ESKRSESLMDI), and 295-317 (KAAEDKNRHQERTPFDRDKDLKV). Glycyl lysine isopeptide (Lys-Gly) (interchain with G-Cter in SUMO2) cross-links involve residues K279 and K316.

This is GPALPP motifs-containing protein 1 (Gpalpp1) from Rattus norvegicus (Rat).